The following is a 793-amino-acid chain: E3 UFM1-protein ligase 1 (793 aa).

Ala-2 is subject to N-acetylalanine. Positions 2–200 are mediates interaction with DDRGK1; sequence ADAWEEIRRL…RGLFSAITRP (199 aa). Residues 2–212 are required for E3 UFM1-protein ligase activity; the sequence is ADAWEEIRRL…VNSLISKYGF (211 aa). An involved in CDK5RAP3-binding region spans residues 121–250; that stretch reads DRLAEEVNDK…KAVFVPDIYS (130 aa). The interval 200-400 is mediates interaction with TRIP4; it reads PTAVNSLISK…NPVHLITEED (201 aa). Residues 407 to 473 are disordered; that stretch reads LESVSTSKKD…SSHTGKKKPE (67 aa). Residue Arg-433 is modified to Omega-N-methylarginine. Phosphoserine is present on Ser-458. Residues 490 to 684 form a mediates interaction with CDK5RAP3 region; that stretch reads IQDAPEEFIS…QLKVTEDPAL (195 aa). Thr-536 is subject to Phosphothreonine.

Belongs to the UFL1 family. As to quaternary structure, catalytic component of the UFM1 ribosome E3 ligase (UREL) complex, composed of UFL1, DDRGK1 and CDK5RAP3. Interacts with E2-like enzyme UFC1. Interacts with RELA. Interacts with NBN; promoting recruitment to double-strand breaks following DNA damage. Interacts (when phosphorylated) with YWHAG/14-3-3-gamma; sequestering UFL1 and preventing its association with PDCD1/PD-1 substrate. In terms of processing, ubiquitinated, leading to its degradation by the proteasome. Interaction with CDK5RAP3 protects both proteins against ubiquitination and degradation via the proteasome. Phosphorylation at Thr-536 by AMPK promotes its interaction with YWHAG/14-3-3-gamma, thereby preventing UFL1 association with PDCD1/PD-1 substrate.

The protein resides in the endoplasmic reticulum membrane. It localises to the cytoplasm. The protein localises to the cytosol. It is found in the nucleus. Its subcellular location is the chromosome. E3 protein ligase that mediates ufmylation, the covalent attachment of the ubiquitin-like modifier UFM1 to lysine residues on target proteins, and which plays a key role in various processes, such as ribosome recycling, response to DNA damage, interferon response or reticulophagy (also called ER-phagy). Catalyzes ufmylation of many protein, such as CD274/PD-L1, CDK5RAP3, CYB5R3, DDRGK1, EIF6, histone H4, MRE11, P4HB, PDCD1/PD-1, TRIP4, RPN1, RPS20/uS10, RPL10/uL16, RPL26/uL24, SYVN1/HRD1 and TP53/p53. As part of the UREL complex, plays a key role in ribosome recycling by catalyzing mono-ufmylation of RPL26/uL24 subunit of the 60S ribosome. Ufmylation of RPL26/uL24 occurs on free 60S ribosomes following ribosome dissociation: it weakens the junction between post-termination 60S subunits and SEC61 translocons, promoting release and recycling of the large ribosomal subunit from the endoplasmic reticulum membrane. Ufmylation of RPL26/uL24 and subsequent 60S ribosome recycling either take place after normal termination of translation or after ribosome stalling during cotranslational translocation at the endoplasmic reticulum. Involved in reticulophagy in response to endoplasmic reticulum stress by mediating ufmylation of proteins such as CYB5R3 and RPN1, thereby promoting lysosomal degradation of ufmylated proteins. Ufmylation in response to endoplasmic reticulum stress is essential for processes such as hematopoiesis, blood vessel morphogenesis or inflammatory response. Mediates ufmylation of DDRGK1 and CDK5RAP3; the role of these modifications is however unclear: as both DDRGK1 and CDK5RAP3 act as substrate adapters for ufmylation, it is uncertain whether ufmylation of these proteins is, a collateral effect or is required for ufmylation. Acts as a negative regulator of T-cell activation by mediating ufmylation and stabilization of PDCD1/PD-1. Also involved in the response to DNA damage: recruited to double-strand break sites following DNA damage and mediates monoufmylation of histone H4 and ufmylation of MRE11. Mediates ufmylation of TP53/p53, promoting its stability. Catalyzes ufmylation of TRIP4, thereby playing a role in nuclear receptor-mediated transcription. Required for hematopoietic stem cell function and hematopoiesis. This chain is E3 UFM1-protein ligase 1, found in Macaca fascicularis (Crab-eating macaque).